A 359-amino-acid chain; its full sequence is Peptide chain release factor 1 (359 aa).

Residue Gln-236 is modified to N5-methylglutamine.

This sequence belongs to the prokaryotic/mitochondrial release factor family. Post-translationally, methylated by PrmC. Methylation increases the termination efficiency of RF1.

The protein localises to the cytoplasm. Peptide chain release factor 1 directs the termination of translation in response to the peptide chain termination codons UAG and UAA. This Ureaplasma parvum serovar 3 (strain ATCC 27815 / 27 / NCTC 11736) protein is Peptide chain release factor 1.